Consider the following 309-residue polypeptide: PI-PLC X domain-containing protein 1 (309 aa).

In terms of domain architecture, PI-PLC X-box spans 17–193 (HMWDIPLWNL…QVILSYDDES (177 aa)).

This Danio rerio (Zebrafish) protein is PI-PLC X domain-containing protein 1 (plcxd1).